Reading from the N-terminus, the 180-residue chain is Bifunctional bis(5'-adenosyl)-triphosphatase/adenylylsulfatase FHIT (180 aa).

Positions 27–134 (SYAFGPYKID…LPRKGGDFEK (108 aa)) constitute an HIT domain. The substrate site is built by asparagine 52 and glutamine 108. The Histidine triad motif motif lies at 119–123 (HVHIH). Histidine 121 acts as the Tele-AMP-histidine intermediate in catalysis. Histidine 123 provides a ligand contact to substrate.

It carries out the reaction P(1),P(3)-bis(5'-adenosyl) triphosphate + H2O = AMP + ADP + 2 H(+). The enzyme catalyses adenosine 5'-phosphosulfate + H2O = sulfate + AMP + 2 H(+). It catalyses the reaction adenosine 5'-phosphosulfate + NH4(+) = adenosine 5'-phosphoramidate + sulfate + 2 H(+). The catalysed reaction is adenosine 5'-phosphoramidate + H2O = AMP + NH4(+). In terms of biological role, possesses dinucleoside triphosphate hydrolase activity. Cleaves P(1)-P(3)-bis(5'-adenosyl) triphosphate (Ap3A) to yield AMP and ADP. Exhibits adenylylsulfatase activity, hydrolyzing adenosine 5'-phosphosulfate to yield AMP and sulfate. Exhibits adenosine 5'-monophosphoramidase activity, hydrolyzing purine nucleotide phosphoramidates with a single phosphate group such as adenosine 5'monophosphoramidate (AMP-NH2) to yield AMP and NH2. Exhibits adenylylsulfate-ammonia adenylyltransferase, catalyzing the ammonolysis of adenosine 5'-phosphosulfate resulting in the formation of adenosine 5'-phosphoramidate. The chain is Bifunctional bis(5'-adenosyl)-triphosphatase/adenylylsulfatase FHIT from Arabidopsis thaliana (Mouse-ear cress).